Here is a 346-residue protein sequence, read N- to C-terminus: Holliday junction branch migration complex subunit RuvB (346 aa).

The tract at residues 1-181 (MSDRNPLIDA…FGIPVRLNFY (181 aa)) is large ATPase domain (RuvB-L). Residues L20, R21, G62, K65, T66, T67, 128-130 (EDF), R171, Y181, and R218 each bind ATP. T66 contributes to the Mg(2+) binding site. Residues 182–252 (TVEELEYIVR…IADEALSRLE (71 aa)) are small ATPAse domain (RuvB-S). Positions 255–346 (NRGLDQLDRR…SQYGLFMEDE (92 aa)) are head domain (RuvB-H). DNA-binding residues include R291, R310, and R315.

The protein belongs to the RuvB family. As to quaternary structure, homohexamer. Forms an RuvA(8)-RuvB(12)-Holliday junction (HJ) complex. HJ DNA is sandwiched between 2 RuvA tetramers; dsDNA enters through RuvA and exits via RuvB. An RuvB hexamer assembles on each DNA strand where it exits the tetramer. Each RuvB hexamer is contacted by two RuvA subunits (via domain III) on 2 adjacent RuvB subunits; this complex drives branch migration. In the full resolvosome a probable DNA-RuvA(4)-RuvB(12)-RuvC(2) complex forms which resolves the HJ.

Its subcellular location is the cytoplasm. The enzyme catalyses ATP + H2O = ADP + phosphate + H(+). Functionally, the RuvA-RuvB-RuvC complex processes Holliday junction (HJ) DNA during genetic recombination and DNA repair, while the RuvA-RuvB complex plays an important role in the rescue of blocked DNA replication forks via replication fork reversal (RFR). RuvA specifically binds to HJ cruciform DNA, conferring on it an open structure. The RuvB hexamer acts as an ATP-dependent pump, pulling dsDNA into and through the RuvAB complex. RuvB forms 2 homohexamers on either side of HJ DNA bound by 1 or 2 RuvA tetramers; 4 subunits per hexamer contact DNA at a time. Coordinated motions by a converter formed by DNA-disengaged RuvB subunits stimulates ATP hydrolysis and nucleotide exchange. Immobilization of the converter enables RuvB to convert the ATP-contained energy into a lever motion, pulling 2 nucleotides of DNA out of the RuvA tetramer per ATP hydrolyzed, thus driving DNA branch migration. The RuvB motors rotate together with the DNA substrate, which together with the progressing nucleotide cycle form the mechanistic basis for DNA recombination by continuous HJ branch migration. Branch migration allows RuvC to scan DNA until it finds its consensus sequence, where it cleaves and resolves cruciform DNA. This Brucella suis (strain ATCC 23445 / NCTC 10510) protein is Holliday junction branch migration complex subunit RuvB.